The chain runs to 639 residues: Exocyst complex component EXO70E2 (639 aa).

This sequence belongs to the EXO70 family. As to quaternary structure, component of the exocyst complex and of the exocyst-positive organelle (EXPO). Interacts with SEC6, SEC10A and SEC10B. As to expression, expressed in roots, in the root-hair zone, both in root hair and nonhair cells.

It is found in the secreted. Its subcellular location is the extracellular exosome. The protein localises to the cell membrane. It localises to the cytoplasm. The protein resides in the endomembrane system. Functionally, influences the subcellular localization patterns of other exocyst complex proteins (e.g. SEC5A, SEC15A, SEC15B and EXO84B) leading to their recruitment to exocyst, well-defined large punctate structures throughout the cytosol. Essential component for the formation and the recruitment of exocyst subunits to the exocyst-positive organelle (EXPO), a secreted double membrane structure also called extracellular exosome, that acts as a sequester for cytosolic proteins to release them into the apoplast. The protein is Exocyst complex component EXO70E2 of Arabidopsis thaliana (Mouse-ear cress).